The sequence spans 375 residues: Ornithine transcarbamylase, chloroplastic (375 aa).

Residues 1 to 53 (MAAAMASHVSTARSPALSFSSSSSSFFPGTTLRRFSAVSLPSPALPRLRVSCQ) constitute a chloroplast transit peptide. Alanine 54 carries the post-translational modification N-acetylalanine. Residues 123 to 126 (SMRT), arginine 174, histidine 201, and glutamine 204 each bind carbamoyl phosphate. Residues asparagine 232, aspartate 293, serine 297, and methionine 298 each coordinate L-ornithine. Cysteine 333 acts as the Proton acceptor in catalysis. Carbamoyl phosphate contacts are provided by residues 333–334 (CL) and arginine 361.

It belongs to the aspartate/ornithine carbamoyltransferase superfamily. OTCase family.

It is found in the plastid. The protein localises to the chloroplast. The catalysed reaction is carbamoyl phosphate + L-ornithine = L-citrulline + phosphate + H(+). The polypeptide is Ornithine transcarbamylase, chloroplastic (OTC) (Arabidopsis thaliana (Mouse-ear cress)).